The chain runs to 201 residues: MAAAKDTHEDHDTSTENTDESNHDPQFEPIVSLPEQEIKTLEEDEEELFKMRAKLFRFASENDLPEWKERGTGDVKLLKHKEKGAIRLLMRRDKTLKICANHYITPMMELKPNAGSDRAWVWNTHADFADECPKPELLAIRFLNAENAQKFKTKFEECRKEIEEREKKAGSGKNDHAEKVAEKLEALSVKEETKEDAEEKQ.

Residues 1-26 show a composition bias toward basic and acidic residues; it reads MAAAKDTHEDHDTSTENTDESNHDPQ. Residues 1 to 35 form a disordered region; that stretch reads MAAAKDTHEDHDTSTENTDESNHDPQFEPIVSLPE. Position 2 is an N-acetylalanine (A2). Phosphothreonine occurs at positions 13 and 18. S21 and S60 each carry phosphoserine. Positions 26 to 164 constitute a RanBD1 domain; it reads QFEPIVSLPE…FEECRKEIEE (139 aa). An N6-acetyllysine; alternate modification is found at K150. N6-succinyllysine; alternate is present on K150. The tract at residues 163–201 is disordered; the sequence is EEREKKAGSGKNDHAEKVAEKLEALSVKEETKEDAEEKQ. K183 is subject to N6-acetyllysine. S188 is subject to Phosphoserine. K190 participates in a covalent cross-link: Glycyl lysine isopeptide (Lys-Gly) (interchain with G-Cter in SUMO2).

It belongs to the RANBP1 family. In terms of assembly, interacts with RAN (via C-terminus of GTP-bound form) but not with GDP-bound RAN. Identified in a complex composed of RAN, RANGAP1 and RANBP1. Identified in a complex that contains TNPO1, RAN and RANBP1. Identified in a complex that contains CSE1L, KPNA2, RAN and RANBP1. Identified in a complex with nucleotide-free RAN and RCC1.

Its function is as follows. Plays a role in RAN-dependent nucleocytoplasmic transport. Alleviates the TNPO1-dependent inhibition of RAN GTPase activity and mediates the dissociation of RAN from proteins involved in transport into the nucleus. Induces a conformation change in the complex formed by XPO1 and RAN that triggers the release of the nuclear export signal of cargo proteins. Promotes the disassembly of the complex formed by RAN and importin beta. Promotes dissociation of RAN from a complex with KPNA2 and CSE1L. Required for normal mitotic spindle assembly and normal progress through mitosis via its effect on RAN. Does not increase the RAN GTPase activity by itself, but increases GTP hydrolysis mediated by RANGAP1. Inhibits RCC1-dependent exchange of RAN-bound GDP by GTP. The polypeptide is Ran-specific GTPase-activating protein (RANBP1) (Homo sapiens (Human)).